The sequence spans 109 residues: Small ribosomal subunit protein uS17 (109 aa).

This sequence belongs to the universal ribosomal protein uS17 family. In terms of assembly, part of the 30S ribosomal subunit.

Functionally, one of the primary rRNA binding proteins, it binds specifically to the 5'-end of 16S ribosomal RNA. The chain is Small ribosomal subunit protein uS17 from Halobacterium salinarum (strain ATCC 29341 / DSM 671 / R1).